The chain runs to 1240 residues: Structural polyprotein (1240 aa).

The interval 1–35 (MFPYPTLNYPPMAPINPMAYRDPNPPRQVAPFRPP) is necessary for nucleocapsid assembly and virus assembly. The segment at 1-102 (MFPYPTLNYP…RKPKPGKRQR (102 aa)) is disordered. A compositionally biased stretch (pro residues) spans 23–34 (PNPPRQVAPFRP). A host transcription inhibition region spans residues 36–69 (LAAQIEDLRRSIANLTLKQRAPNPPAGPPAKRKK). The Supraphysiological nuclear export signal motif lies at 43-50 (LRRSIANL). N49 is a glycosylation site (N-linked (GlcNAc...) asparagine; by host). Residues 65–102 (AKRKKPAPKPKPAQAKKKRPPPPAKKQKRKPKPGKRQR) show a composition bias toward basic residues. A Nuclear localization signal motif is present at residues 66–70 (KRKKP). The binding to the viral RNA stretch occupies residues 82–112 (KRPPPPAKKQKRKPKPGKRQRMCMKLESDKT). A ribosome-binding region spans residues 97 to 111 (PGKRQRMCMKLESDK). Residue S109 is modified to Phosphoserine. One can recognise a Peptidase S3 domain in the interval 111-260 (KTFPIMLNGQ…KDTPEGSEPW (150 aa)). Phosphothreonine is present on T112. Active-site charge relay system residues include H137, D159, and S211. The tract at residues 261–272 (SLATVMCVLANI) is functions as an uncleaved signal peptide for the precursor of protein E3/E2. The Extracellular segment spans residues 261 to 682 (SLATVMCVLA…HEVVVYYYNR (422 aa)). 2 N-linked (GlcNAc...) asparagine; by host glycosylation sites follow: N271 and N638. The chain crosses the membrane as a helical span at residues 683-703 (YPLTTIIGLCTCVAIIMVSCV). Topologically, residues 704-743 (HPCGSFAGLRNLCITPYKLAPNAQVPILLALLCCIKPTRA) are cytoplasmic. 4 S-palmitoyl cysteine; by host lipidation sites follow: C706, C716, C736, and C737. Residues 715-735 (LCITPYKLAPNAQVPILLALL) form a transient transmembrane before p62-6K protein processing region. Residues 744 to 758 (DDTLQVLNYLWNNNQ) are Extracellular-facing. A helical membrane pass occupies residues 759–779 (NFFWMQTLIPLAALIVCMRIV). Position 780 (R780) is a topological domain, cytoplasmic. A helical transmembrane segment spans residues 781–801 (CLFCCGPAFLLVCGAWAAAYE). Residues 802–1216 (HTAVMPNKVG…WSWLKVLVGG (415 aa)) lie on the Extracellular side of the membrane. N834 carries an N-linked (GlcNAc...) asparagine; by host glycan. 4 disulfide bridges follow: C848/C913, C861/C893, C862/C895, and C867/C877. The interval 883-900 (VYPFMWGGAYCFCDTENT) is E1 fusion peptide loop. The N-linked (GlcNAc...) asparagine; by host glycan is linked to N933. 3 disulfide bridges follow: C1059–C1071, C1101–C1176, and C1106–C1180. A helical membrane pass occupies residues 1217–1237 (TSAFIVLGLIATAVVALVLFF). The Cytoplasmic portion of the chain corresponds to 1238–1240 (HRH).

In terms of assembly, part of a tetrameric complex composed of host CRM1, host importin alpha/beta dimer and the viral capsid; this complex blocks the receptor-mediated transport through the nuclear pore. Interacts with host phosphatase PPP1CA; this interaction dephosphorylates the capsid protein, which increases its ability to bind to the viral genome. Interacts with host karyopherin KPNA4; this interaction allows the nuclear import of the viral capsid protein. Interacts with spike glycoprotein E2. Interacts with host IRAK1; the interaction leads to inhibition of IRAK1-dependent signaling. As to quaternary structure, the precursor of protein E3/E2 and E1 form a heterodimer shortly after synthesis. The precursor of protein E3/E2 and E1 form a heterodimer shortly after synthesis. Processing of the precursor of protein E3/E2 into E2 and E3 results in a heterodimer of the spike glycoproteins E2 and E1. Spike at virion surface are constituted of three E2-E1 heterodimers. After target cell attachment and endocytosis, E1 change conformation to form homotrimers. Interacts with 6K protein. In terms of assembly, processing of the precursor of protein E3/E2 into E2 and E3 results in a heterodimer of the spike glycoproteins E2 and E1. Spike at virion surface are constituted of three E2-E1 heterodimers. Interacts with 6K protein. As to quaternary structure, interacts with spike glycoprotein E1. Interacts with spike glycoprotein E2. In terms of processing, structural polyprotein: Specific enzymatic cleavages in vivo yield mature proteins. Capsid protein is auto-cleaved during polyprotein translation, unmasking a signal peptide at the N-terminus of the precursor of E3/E2. The remaining polyprotein is then targeted to the host endoplasmic reticulum, where host signal peptidase cleaves it into pE2, 6K and E1 proteins. pE2 is further processed to mature E3 and E2 by host furin in trans-Golgi vesicle. Phosphorylated on serine and threonine residues. Post-translationally, palmitoylated via thioester bonds. These palmitoylations may induce disruption of the C-terminus transmembrane. This would result in the reorientation of E2 C-terminus from lumenal to cytoplasmic side. In terms of processing, N-glycosylated. Palmitoylated via thioester bonds.

Its subcellular location is the virion. It localises to the host cytoplasm. It is found in the host cell membrane. The protein resides in the host nucleus. The protein localises to the virion membrane. The enzyme catalyses Autocatalytic release of the core protein from the N-terminus of the togavirus structural polyprotein by hydrolysis of a -Trp-|-Ser- bond.. Functionally, forms an icosahedral capsid with a T=4 symmetry composed of 240 copies of the capsid protein surrounded by a lipid membrane through which penetrate 80 spikes composed of trimers of E1-E2 heterodimers. The capsid protein binds to the viral RNA genome at a site adjacent to a ribosome binding site for viral genome translation following genome release. Possesses a protease activity that results in its autocatalytic cleavage from the nascent structural protein. Following its self-cleavage, the capsid protein transiently associates with ribosomes, and within several minutes the protein binds to viral RNA and rapidly assembles into icosahedric core particles. The resulting nucleocapsid eventually associates with the cytoplasmic domain of the spike glycoprotein E2 at the cell membrane, leading to budding and formation of mature virions. In case of infection, new virions attach to target cells and after clathrin-mediated endocytosis their membrane fuses with the host endosomal membrane. This leads to the release of the nucleocapsid into the cytoplasm, followed by an uncoating event necessary for the genomic RNA to become accessible. The uncoating might be triggered by the interaction of capsid proteins with ribosomes. Binding of ribosomes would release the genomic RNA since the same region is genomic RNA-binding and ribosome-binding. Specifically inhibits interleukin-1 receptor-associated kinase 1/IRAK1-dependent signaling during viral entry, representing a means by which the alphaviruses may evade innate immune detection and activation prior to viral gene expression. Inhibits host transcription. Forms a tetrameric complex with XPO1/CRM1 and the nuclear import receptor importin. This complex blocks the central channel of host nuclear pores thereby inhibiting the receptor-mediated nuclear transport and thus the host mRNA and rRNA transcription. The inhibition of transcription is linked to a cytopathic effect on the host cell. In terms of biological role, provides the signal sequence for the translocation of the precursor of protein E3/E2 to the host endoplasmic reticulum. Furin-cleaved E3 remains associated with spike glycoprotein E1 and mediates pH protection of the latter during the transport via the secretory pathway. After virion release from the host cell, the assembly protein E3 is gradually released in the extracellular space. Its function is as follows. Plays a role in viral attachment to target host cell, by binding to the cell receptor. Synthesized as a p62 precursor which is processed by furin at the cell membrane just before virion budding, giving rise to E2-E1 heterodimer. The p62-E1 heterodimer is stable, whereas E2-E1 is unstable and dissociate at low pH. p62 is processed at the last step, presumably to avoid E1 fusion activation before its final export to cell surface. E2 C-terminus contains a transitory transmembrane that would be disrupted by palmitoylation, resulting in reorientation of the C-terminal tail from lumenal to cytoplasmic side. This step is critical since E2 C-terminus is involved in budding by interacting with capsid proteins. This release of E2 C-terminus in cytoplasm occurs lately in protein export, and precludes premature assembly of particles at the endoplasmic reticulum membrane. Constitutive membrane protein involved in virus glycoprotein processing, cell permeabilization, and the budding of viral particles. Disrupts the calcium homeostasis of the cell, probably at the endoplasmic reticulum level. This leads to cytoplasmic calcium elevation. Because of its lipophilic properties, the 6K protein is postulated to influence the selection of lipids that interact with the transmembrane domains of the glycoproteins, which, in turn, affects the deformability of the bilayer required for the extreme curvature that occurs as budding proceeds. Present in low amount in virions, about 3% compared to viral glycoproteins. Functionally, class II viral fusion protein. Fusion activity is inactive as long as E1 is bound to E2 in mature virion. After virus attachment to target cell and endocytosis, acidification of the endosome would induce dissociation of E1/E2 heterodimer and concomitant trimerization of the E1 subunits. This E1 trimer is fusion active, and promotes release of viral nucleocapsid in cytoplasm after endosome and viral membrane fusion. Efficient fusion requires the presence of cholesterol and sphingolipid in the target membrane. Fusion is optimal at levels of about 1 molecule of cholesterol per 2 molecules of phospholipids, and is specific for sterols containing a 3-beta-hydroxyl group. This chain is Structural polyprotein, found in Eastern equine encephalitis virus (strain va33[ten broeck]) (EEEV).